A 298-amino-acid chain; its full sequence is N-acetylmuramic acid 6-phosphate etherase (298 aa).

The SIS domain maps to 55–218; it reads ASKRYREGGR…STGVMIKQGK (164 aa). Glutamate 83 (proton donor) is an active-site residue. The active site involves glutamate 114.

This sequence belongs to the GCKR-like family. MurNAc-6-P etherase subfamily. In terms of assembly, homodimer.

It catalyses the reaction N-acetyl-D-muramate 6-phosphate + H2O = N-acetyl-D-glucosamine 6-phosphate + (R)-lactate. The protein operates within amino-sugar metabolism; N-acetylmuramate degradation. Its function is as follows. Specifically catalyzes the cleavage of the D-lactyl ether substituent of MurNAc 6-phosphate, producing GlcNAc 6-phosphate and D-lactate. The polypeptide is N-acetylmuramic acid 6-phosphate etherase (Lactobacillus johnsonii (strain CNCM I-12250 / La1 / NCC 533)).